The following is a 588-amino-acid chain: L-fucose isomerase (588 aa).

Catalysis depends on proton acceptor residues E335 and D359. Positions 335, 359, and 525 each coordinate Mn(2+).

This sequence belongs to the L-fucose isomerase family. Requires Mn(2+) as cofactor.

Its subcellular location is the cytoplasm. The enzyme catalyses L-fucose = L-fuculose. It participates in carbohydrate degradation; L-fucose degradation; L-lactaldehyde and glycerone phosphate from L-fucose: step 1/3. Functionally, converts the aldose L-fucose into the corresponding ketose L-fuculose. This Streptococcus pneumoniae serotype 2 (strain D39 / NCTC 7466) protein is L-fucose isomerase.